We begin with the raw amino-acid sequence, 604 residues long: Replication protein E1 (604 aa).

Residues 76–78 (KRK) carry the Nuclear localization signal motif. Residues Ser81 and Ser89 each carry the phosphoserine; by host modification. The Nuclear export signal signature appears at 88–97 (LSPRLESISL). Positions 144–307 (GSGAIDIDYL…TILGHQNAEA (164 aa)) are DNA-binding region. Residues 406-556 (VNFITFLAAF…FPMKPDNTPQ (151 aa)) form the SF3 helicase domain. ATP is bound at residue 432–439 (GPPNSGKS). Lys513 participates in a covalent cross-link: Glycyl lysine isopeptide (Lys-Gly) (interchain with G-Cter in SUMO). Residues 579–604 (DQEEEGQHGESQRAFQCSARSANEHI) are disordered. Positions 591–604 (RAFQCSARSANEHI) are enriched in polar residues.

This sequence belongs to the papillomaviridae E1 protein family. Can form hexamers. Interacts with E2 protein; this interaction increases E1 DNA binding specificity. Interacts with host DNA polymerase subunit POLA2. Interacts with host single stranded DNA-binding protein RPA1. Interacts with host TOP1; this interaction stimulates the enzymatic activity of TOP1. Phosphorylated. In terms of processing, sumoylated.

Its subcellular location is the host nucleus. It carries out the reaction Couples ATP hydrolysis with the unwinding of duplex DNA by translocating in the 3'-5' direction.. The catalysed reaction is ATP + H2O = ADP + phosphate + H(+). Functionally, ATP-dependent DNA 3'-5' helicase required for initiation of viral DNA replication. It forms a complex with the viral E2 protein. The E1-E2 complex binds to the replication origin which contains binding sites for both proteins. During the initial step, a dimer of E1 interacts with a dimer of protein E2 leading to a complex that binds the viral origin of replication with high specificity. Then, a second dimer of E1 displaces the E2 dimer in an ATP-dependent manner to form the E1 tetramer. Following this, two E1 monomers are added to each half of the site, which results in the formation of two E1 trimers on the viral ori. Subsequently, two hexamers will be created. The double hexamer acts as a bi-directional helicase machinery and unwinds the viral DNA and then recruits the host DNA polymerase to start replication. The polypeptide is Replication protein E1 (Human papillomavirus 12).